The following is a 788-amino-acid chain: Phenylalanine--tRNA ligase beta subunit (788 aa).

In terms of domain architecture, tRNA-binding spans 39–147 (FNVSGEIITA…DPVELGVNVV (109 aa)). The 74-residue stretch at 399–472 (IEPKKVMLRK…RIYGYEKVES (74 aa)) folds into the B5 domain. D450, D456, E459, and E460 together coordinate Mg(2+). One can recognise an FDX-ACB domain in the interval 694 to 787 (PRFPAVRRDI…AEREFGIRRR (94 aa)).

It belongs to the phenylalanyl-tRNA synthetase beta subunit family. Type 1 subfamily. In terms of assembly, tetramer of two alpha and two beta subunits. Requires Mg(2+) as cofactor.

It localises to the cytoplasm. It carries out the reaction tRNA(Phe) + L-phenylalanine + ATP = L-phenylalanyl-tRNA(Phe) + AMP + diphosphate + H(+). The protein is Phenylalanine--tRNA ligase beta subunit (pheT) of Thermotoga maritima (strain ATCC 43589 / DSM 3109 / JCM 10099 / NBRC 100826 / MSB8).